The primary structure comprises 167 residues: Large ribosomal subunit protein uL23 (167 aa).

Positions 1–130 (MNVNEIIKGP…ELEAKNKEIA (130 aa)) are large ribosomal subunit protein uL23. Disordered regions lie at residues 91-112 (FEDE…TDEK) and 137-167 (QAEL…NSAK). Basic and acidic residues-rich tracts occupy residues 97–112 (QDQK…TDEK) and 137–157 (QAEL…KIEN). Positions 131 to 167 (EKLAKKQAELAKKESETNENQEKKIENQTENQENSAK) are unknown. Residues 158–167 (QTENQENSAK) show a composition bias toward polar residues.

The protein belongs to the universal ribosomal protein uL23 family. In terms of assembly, part of the 50S ribosomal subunit. Contacts protein L29, and trigger factor when it is bound to the ribosome.

Its function is as follows. One of the early assembly proteins it binds 23S rRNA. One of the proteins that surrounds the polypeptide exit tunnel on the outside of the ribosome. Forms the main docking site for trigger factor binding to the ribosome. The chain is Large ribosomal subunit protein uL23 from Mesomycoplasma hyopneumoniae (strain 7448) (Mycoplasma hyopneumoniae).